We begin with the raw amino-acid sequence, 205 residues long: Cytochrome c biogenesis ATP-binding export protein CcmA 1 (205 aa).

The ABC transporter domain maps to 2-205; sequence LEARDLYCER…LALTGGEAGL (204 aa). 34 to 41 serves as a coordination point for ATP; sequence GGNGAGKT.

Belongs to the ABC transporter superfamily. CcmA exporter (TC 3.A.1.107) family. As to quaternary structure, the complex is composed of two ATP-binding proteins (CcmA) and two transmembrane proteins (CcmB).

Its subcellular location is the cell inner membrane. It carries out the reaction heme b(in) + ATP + H2O = heme b(out) + ADP + phosphate + H(+). Its function is as follows. Part of the ABC transporter complex CcmAB involved in the biogenesis of c-type cytochromes; once thought to export heme, this seems not to be the case, but its exact role is uncertain. Responsible for energy coupling to the transport system. This chain is Cytochrome c biogenesis ATP-binding export protein CcmA 1, found in Salmonella paratyphi A (strain ATCC 9150 / SARB42).